A 1214-amino-acid chain; its full sequence is Myosin-1 (1214 aa).

Positions 1 to 21 are disordered; the sequence is MAIIKRGARNKTAQEPAKRSA. A Myosin motor domain is found at 36 to 715; sequence VGVSDLTLLS…TLFALEHMRD (680 aa). 129–136 is a binding site for ATP; that stretch reads GESGAGKT. S357 bears the Phosphoserine mark. The tract at residues 404–486 is actin-binding; the sequence is SIGILDIYGF…PGIFAAMNDS (83 aa). IQ domains follow at residues 719–739 and 740–765; these read YNMA…RIDS and ATRI…EGSK. Residues 771–961 enclose the TH1 domain; that stretch reads KERRTMSLLG…TILVRRGHPA (191 aa). Disordered regions lie at residues 926–1090, 1129–1177, and 1193–1214; these read KPGK…SELP, HQGG…AAAQ, and NKMR…DDDW. A compositionally biased stretch (basic residues) spans 965–980; it reads QKKKPKKGKGHSKHHS. 2 stretches are compositionally biased toward low complexity: residues 981–1000 and 1037–1057; these read TSTS…APVS and AAQP…QKKV. Pro residues predominate over residues 1058 to 1067; that stretch reads APPPPPPPPM. The region spanning 1069–1131 is the SH3 domain; sequence SSEPKYEAAY…PTNYVVKHQG (63 aa). Residues 1157–1177 show a composition bias toward low complexity; it reads VSSSQSETATTATPASVAAAQ. Residues 1200–1214 show a composition bias toward acidic residues; sequence DGEDNGNDDDDDDDW.

Belongs to the TRAFAC class myosin-kinesin ATPase superfamily. Myosin family. In terms of processing, phosphorylation of the TEDS site (Ser-357) is required for the polarization of the actin cytoskeleton. Phosphorylation probably activates the myosin-I ATPase activity.

It is found in the cytoplasm. It localises to the cytoskeleton. Its subcellular location is the actin patch. In terms of biological role, type-I myosin implicated in the organization of the actin cytoskeleton. Required for proper actin cytoskeleton polarization. At the cell cortex, assembles in patch-like structures together with proteins from the actin-polymerizing machinery and promotes actin assembly. Functions as actin nucleation-promoting factor (NPF) for the Arp2/3 complex. This Vanderwaltozyma polyspora (strain ATCC 22028 / DSM 70294 / BCRC 21397 / CBS 2163 / NBRC 10782 / NRRL Y-8283 / UCD 57-17) (Kluyveromyces polysporus) protein is Myosin-1 (MYO1).